We begin with the raw amino-acid sequence, 434 residues long: Glycoprotein U20 (434 aa).

The N-terminal stretch at 1-15 (MITVFVACLFQCVSS) is a signal peptide. A helical transmembrane segment spans residues 322–342 (LLWIFIVIPIAAGCMFLYILT).

It is found in the host endoplasmic reticulum membrane. It localises to the host lysosome membrane. In terms of biological role, plays a role in the down-regulation of the host stress-induced NKG2D ligand UBPL1, which enables immune cells expressing the NKG2D receptor to recognize and annihilate infected cells prior to viral spread. The chain is Glycoprotein U20 (U20) from Human herpesvirus 6B (strain Z29) (HHV-6 variant B).